A 328-amino-acid chain; its full sequence is Ketol-acid reductoisomerase (NADP(+)) (328 aa).

The KARI N-terminal Rossmann domain occupies 2-182; sequence AKIYTDREAS…GATRAGVIET (181 aa). NADP(+) contacts are provided by residues 25 to 28, Arg48, Ser53, and 83 to 86; these read YGIQ and DMEQ. His108 is a catalytic residue. Residue Gly134 participates in NADP(+) binding. The region spanning 183–328 is the KARI C-terminal knotted domain; sequence TFAEETETDL…EEMRKLLFGP (146 aa). 4 residues coordinate Mg(2+): Asp191, Glu195, Glu227, and Glu231. Ser252 serves as a coordination point for substrate.

It belongs to the ketol-acid reductoisomerase family. Requires Mg(2+) as cofactor.

The catalysed reaction is (2R)-2,3-dihydroxy-3-methylbutanoate + NADP(+) = (2S)-2-acetolactate + NADPH + H(+). It catalyses the reaction (2R,3R)-2,3-dihydroxy-3-methylpentanoate + NADP(+) = (S)-2-ethyl-2-hydroxy-3-oxobutanoate + NADPH + H(+). The protein operates within amino-acid biosynthesis; L-isoleucine biosynthesis; L-isoleucine from 2-oxobutanoate: step 2/4. It participates in amino-acid biosynthesis; L-valine biosynthesis; L-valine from pyruvate: step 2/4. In terms of biological role, involved in the biosynthesis of branched-chain amino acids (BCAA). Catalyzes an alkyl-migration followed by a ketol-acid reduction of (S)-2-acetolactate (S2AL) to yield (R)-2,3-dihydroxy-isovalerate. In the isomerase reaction, S2AL is rearranged via a Mg-dependent methyl migration to produce 3-hydroxy-3-methyl-2-ketobutyrate (HMKB). In the reductase reaction, this 2-ketoacid undergoes a metal-dependent reduction by NADPH to yield (R)-2,3-dihydroxy-isovalerate. This is Ketol-acid reductoisomerase (NADP(+)) from Pyrobaculum aerophilum (strain ATCC 51768 / DSM 7523 / JCM 9630 / CIP 104966 / NBRC 100827 / IM2).